The sequence spans 204 residues: dITP/XTP pyrophosphatase (204 aa).

7-12 (TNNKDK) contacts substrate. Residues aspartate 38 and aspartate 74 each contribute to the Mg(2+) site. Residue aspartate 74 is the Proton acceptor of the active site. Substrate contacts are provided by residues serine 75, 156-159 (FGYD), lysine 179, and 184-185 (HR).

The protein belongs to the HAM1 NTPase family. In terms of assembly, homodimer. Requires Mg(2+) as cofactor.

The enzyme catalyses XTP + H2O = XMP + diphosphate + H(+). It catalyses the reaction dITP + H2O = dIMP + diphosphate + H(+). The catalysed reaction is ITP + H2O = IMP + diphosphate + H(+). Pyrophosphatase that catalyzes the hydrolysis of nucleoside triphosphates to their monophosphate derivatives, with a high preference for the non-canonical purine nucleotides XTP (xanthosine triphosphate), dITP (deoxyinosine triphosphate) and ITP. Seems to function as a house-cleaning enzyme that removes non-canonical purine nucleotides from the nucleotide pool, thus preventing their incorporation into DNA/RNA and avoiding chromosomal lesions. The chain is dITP/XTP pyrophosphatase from Campylobacter fetus subsp. fetus (strain 82-40).